The chain runs to 1969 residues: Cytadherence high molecular weight protein 1 (1969 aa).

One copy of the HAT 1 repeat lies at 148 to 166 (YYDENEEWVWTGYFDEDNK). A disordered region spans residues 174-244 (KPAEVEALEE…QPESEQEGSG (71 aa)). 2 stretches are compositionally biased toward acidic residues: residues 179–207 (EALEEESEATEEVVEQEPQEEVQAEEVVE) and 214–242 (QPEEEVAAEEYAEAAQEEYEEQPESEQEG). HAT repeat units follow at residues 258-278 (YYDENNDWVWTGYFDENNNFV), 300-331 (AQQEQVQEEYEQQPEQEGSGEYWEQFVGVEGY), and 333-353 (YYDENNDWVWTGYFDENNNFV). The tract at residues 294–319 (QVEEYSAQQEQVQEEYEQQPEQEGSG) is disordered. The interval 365–393 (VSEEQYSESVSEEQEPASEEQVAEEPAQV) is disordered. A compositionally biased stretch (acidic residues) spans 374-387 (VSEEQEPASEEQVA). HAT repeat units follow at residues 477-497 (YYDENNEWVWKGYFNEYGMFI) and 959-997 (LTLVEEEPFFNKFIGNEQYGYYNNKNVWIWTGYFDDQNN). The stretch at 1000-1027 (SDKDSKTQKVDQLIEEFNKQEAIKKTEE) forms a coiled coil. The HAT 7 repeat unit spans residues 1029–1067 (EAKKASEPFYNKYIGNKQFGYYNDKNVWIWNGYFDENDQ). Coiled-coil stretches lie at residues 1082-1190 (IEDE…FDNF), 1547-1621 (SVNQ…LALT), and 1758-1790 (NRGDYKFVQEQIQELRAEHANKTRAISFYNKKV).

It is found in the cell projection. The protein localises to the attachment organelle membrane. Component of the cytoskeleton-like structure which stabilizes the shape of the wall-less Mycoplasma. This cytoskeleton-like network of accessory proteins containing HMW proteins 1 to 5 allows the proper anchoring of cytadhesin proteins in the mycoplasmal membrane at the attachment organelle. This chain is Cytadherence high molecular weight protein 1 (hlp1), found in Mycoplasmoides gallisepticum (strain R(low / passage 15 / clone 2)) (Mycoplasma gallisepticum).